A 404-amino-acid chain; its full sequence is Glucosyl-3-phosphoglycerate synthase (404 aa).

Asp-146 is an a divalent metal cation binding site. Gly-188–Val-190 is a (2R)-3-phosphoglycerate binding site. His-270 provides a ligand contact to a divalent metal cation.

Belongs to the glycosyltransferase 2 family. Mn(2+) is required as a cofactor. Requires Co(2+) as cofactor. The cofactor is Mg(2+).

It carries out the reaction an NDP-alpha-D-glucose + (2R)-3-phosphoglycerate = (2R)-2-O-(alpha-D-glucopyranosyl)-3-phospho-glycerate + a ribonucleoside 5'-diphosphate + H(+). Functionally, involved in the biosynthesis of 6-O-methylglucose lipopolysaccarides (MGLPs). Catalyzes the transfer of a glucose (Glc) moiety from uridine diphosphate (UDP-Glc) to the position 2 of 3-phospho-D-glycerate (3-PGA) to form glucosyl-3-phosphoglycerate (GPG). In Methanococcoides burtonii (strain DSM 6242 / NBRC 107633 / OCM 468 / ACE-M), this protein is Glucosyl-3-phosphoglycerate synthase.